Reading from the N-terminus, the 116-residue chain is Large ribosomal subunit protein bL19 (116 aa).

This sequence belongs to the bacterial ribosomal protein bL19 family.

This protein is located at the 30S-50S ribosomal subunit interface and may play a role in the structure and function of the aminoacyl-tRNA binding site. The chain is Large ribosomal subunit protein bL19 from Staphylococcus aureus (strain USA300).